Reading from the N-terminus, the 300-residue chain is Bifunctional protein FolD (300 aa).

Residues 169–171 (GRG), serine 196, and isoleucine 237 contribute to the NADP(+) site.

It belongs to the tetrahydrofolate dehydrogenase/cyclohydrolase family. In terms of assembly, homodimer.

The enzyme catalyses (6R)-5,10-methylene-5,6,7,8-tetrahydrofolate + NADP(+) = (6R)-5,10-methenyltetrahydrofolate + NADPH. It catalyses the reaction (6R)-5,10-methenyltetrahydrofolate + H2O = (6R)-10-formyltetrahydrofolate + H(+). The protein operates within one-carbon metabolism; tetrahydrofolate interconversion. Functionally, catalyzes the oxidation of 5,10-methylenetetrahydrofolate to 5,10-methenyltetrahydrofolate and then the hydrolysis of 5,10-methenyltetrahydrofolate to 10-formyltetrahydrofolate. This chain is Bifunctional protein FolD, found in Clavibacter sepedonicus (Clavibacter michiganensis subsp. sepedonicus).